Here is a 238-residue protein sequence, read N- to C-terminus: ATP synthase subunit a (238 aa).

A run of 5 helical transmembrane segments spans residues 17-37, 75-95, 112-132, 172-192, and 194-214; these read LSNI…AIIC, FHVL…LGLP, DPIV…YYGI, YGNI…LAHI, and IFVG…SLFI.

The protein belongs to the ATPase A chain family. F-type ATPases have 2 components, CF(1) - the catalytic core - and CF(0) - the membrane proton channel. CF(1) has five subunits: alpha(3), beta(3), gamma(1), delta(1), epsilon(1). CF(0) has three main subunits: a(1), b(2) and c(9-12). The alpha and beta chains form an alternating ring which encloses part of the gamma chain. CF(1) is attached to CF(0) by a central stalk formed by the gamma and epsilon chains, while a peripheral stalk is formed by the delta and b chains.

The protein resides in the cell membrane. Key component of the proton channel; it plays a direct role in the translocation of protons across the membrane. The chain is ATP synthase subunit a from Listeria monocytogenes serovar 1/2a (strain ATCC BAA-679 / EGD-e).